The chain runs to 181 residues: Inner membrane-spanning protein YciB (181 aa).

5 consecutive transmembrane segments (helical) span residues 22 to 42 (IYTATGALIIATAIQLVVTYA), 50 to 70 (MQLITFIMVTVFGGMTIFLHD), 80 to 100 (IVYCVFAAGLIIAHILGKPVI), 122 to 142 (WVLFFTVCAIANLYVAFEMPL), and 148 to 168 (FKVFGLLGLTFLYTLFTGMYV).

It belongs to the YciB family.

Its subcellular location is the cell inner membrane. Functionally, plays a role in cell envelope biogenesis, maintenance of cell envelope integrity and membrane homeostasis. The polypeptide is Inner membrane-spanning protein YciB (Aliivibrio fischeri (strain ATCC 700601 / ES114) (Vibrio fischeri)).